Here is a 448-residue protein sequence, read N- to C-terminus: C4-dicarboxylate transport protein (448 aa).

The next 8 helical transmembrane spans lie at 20–38, 53–75, 88–110, 161–178, 199–220, 230–252, 325–347, and 362–384; these read LYFQ…GHFY, IRLV…IAGM, AMIY…ANTV, ILQV…LGIV, LVAI…FTIG, LAML…LGAV, LFIA…LLVA, and FITL…ALIL.

This sequence belongs to the dicarboxylate/amino acid:cation symporter (DAACS) (TC 2.A.23) family.

It localises to the cell inner membrane. In terms of biological role, responsible for the transport of dicarboxylates such as succinate, fumarate, and malate from the periplasm across the membrane. The polypeptide is C4-dicarboxylate transport protein (Agrobacterium fabrum (strain C58 / ATCC 33970) (Agrobacterium tumefaciens (strain C58))).